A 298-amino-acid polypeptide reads, in one-letter code: Inosose dehydratase (298 aa).

This sequence belongs to the IolE/MocC family. Glutathione serves as cofactor. The cofactor is Co(2+). It depends on Mn(2+) as a cofactor.

It carries out the reaction scyllo-inosose = 3D-3,5/4-trihydroxycyclohexane-1,2-dione + H2O. It participates in polyol metabolism; myo-inositol degradation into acetyl-CoA; acetyl-CoA from myo-inositol: step 2/7. In terms of biological role, catalyzes the dehydration of inosose (2-keto-myo-inositol, 2KMI or 2,4,6/3,5-pentahydroxycyclohexanone) to 3D-(3,5/4)-trihydroxycyclohexane-1,2-dione (D-2,3-diketo-4-deoxy-epi-inositol). The chain is Inosose dehydratase from Bacillus cereus (strain AH820).